Consider the following 860-residue polypeptide: Leucine--tRNA ligase (860 aa).

A 'HIGH' region motif is present at residues 42–52 (PYPSGRLHMGH). Positions 619–623 (KMSKS) match the 'KMSKS' region motif. K622 serves as a coordination point for ATP.

This sequence belongs to the class-I aminoacyl-tRNA synthetase family.

It is found in the cytoplasm. It catalyses the reaction tRNA(Leu) + L-leucine + ATP = L-leucyl-tRNA(Leu) + AMP + diphosphate. This is Leucine--tRNA ligase from Salmonella paratyphi B (strain ATCC BAA-1250 / SPB7).